The primary structure comprises 419 residues: BTB/POZ domain-containing protein KCTD20 (419 aa).

The 75-residue stretch at 117 to 191 folds into the BTB domain; it reads EKVTLLVDGT…YKTGIINCPD (75 aa).

In terms of assembly, interacts with AKT1; AKT2 and AKT3. Interacts with PPP2CA and PPP1CA. Part of a complex containing MARK4. As to expression, ubiquitously expressed.

The protein resides in the cytoplasm. Promotes the phosphorylation of AKT family members. The polypeptide is BTB/POZ domain-containing protein KCTD20 (Kctd20) (Mus musculus (Mouse)).